Consider the following 120-residue polypeptide: NAD(P)H-quinone oxidoreductase subunit 3, chloroplastic (120 aa).

3 helical membrane passes run 9-29 (IFWA…XISG), 64-84 (MFAL…PWAM), and 88-108 (VLGV…IVGL).

The protein belongs to the complex I subunit 3 family. As to quaternary structure, NDH is composed of at least 16 different subunits, 5 of which are encoded in the nucleus.

It localises to the plastid. The protein resides in the chloroplast thylakoid membrane. It catalyses the reaction a plastoquinone + NADH + (n+1) H(+)(in) = a plastoquinol + NAD(+) + n H(+)(out). The catalysed reaction is a plastoquinone + NADPH + (n+1) H(+)(in) = a plastoquinol + NADP(+) + n H(+)(out). Its function is as follows. NDH shuttles electrons from NAD(P)H:plastoquinone, via FMN and iron-sulfur (Fe-S) centers, to quinones in the photosynthetic chain and possibly in a chloroplast respiratory chain. The immediate electron acceptor for the enzyme in this species is believed to be plastoquinone. Couples the redox reaction to proton translocation, and thus conserves the redox energy in a proton gradient. The chain is NAD(P)H-quinone oxidoreductase subunit 3, chloroplastic from Eucalyptus globulus subsp. globulus (Tasmanian blue gum).